The sequence spans 172 residues: MIIFKDLLTGDEMFTDSSKYKVVDGCLYEVECRHISRRHGDIQLDGANPSQEEADEATDDIVESGLDLVLNQRLIETGFSKNDYKVYLKGYTKALQDKWKEMEKSESEINEAKTKLTEAVKKVLPKLSDLQFFMGESSNPDGLIALLEYRQVDEKEVPIMMFFKHGLDEEKV.

Residues 1–172 enclose the TCTP domain; that stretch reads MIIFKDLLTG…FKHGLDEEKV (172 aa).

This sequence belongs to the TCTP family. As to expression, expressed by the venom gland.

It localises to the secreted. Functionally, venom protein that causes edema, enhances vascular permeability and is likely related to the inflammatory activity of the venom. This is Translationally-controlled tumor protein homolog from Loxosceles intermedia (Brown spider).